The primary structure comprises 375 residues: Histidine biosynthesis bifunctional protein HisB (375 aa).

The segment at 1–168 (MTPILFVDRD…GIAHELADAP (168 aa)) is histidinol-phosphatase. Asp-8 serves as the catalytic Nucleophile. Residues Asp-8, Asp-10, and Asp-128 each contribute to the Mg(2+) site. Asp-10 (proton donor) is an active-site residue. The tract at residues 169–375 (RRAVVQRNTK…TALPSTKGAL (207 aa)) is imidazoleglycerol-phosphate dehydratase.

It in the N-terminal section; belongs to the histidinol-phosphatase family. In the C-terminal section; belongs to the imidazoleglycerol-phosphate dehydratase family. The cofactor is Mg(2+).

Its subcellular location is the cytoplasm. The enzyme catalyses D-erythro-1-(imidazol-4-yl)glycerol 3-phosphate = 3-(imidazol-4-yl)-2-oxopropyl phosphate + H2O. The catalysed reaction is L-histidinol phosphate + H2O = L-histidinol + phosphate. It functions in the pathway amino-acid biosynthesis; L-histidine biosynthesis; L-histidine from 5-phospho-alpha-D-ribose 1-diphosphate: step 6/9. Its pathway is amino-acid biosynthesis; L-histidine biosynthesis; L-histidine from 5-phospho-alpha-D-ribose 1-diphosphate: step 8/9. The sequence is that of Histidine biosynthesis bifunctional protein HisB from Xanthomonas campestris pv. campestris (strain 8004).